We begin with the raw amino-acid sequence, 295 residues long: Pyridoxal 5'-phosphate synthase subunit PdxS (295 aa).

Residue aspartate 25 coordinates D-ribose 5-phosphate. Lysine 82 serves as the catalytic Schiff-base intermediate with D-ribose 5-phosphate. D-ribose 5-phosphate is bound at residue glycine 154. D-glyceraldehyde 3-phosphate is bound at residue arginine 166. D-ribose 5-phosphate contacts are provided by residues glycine 215 and 236–237; that span reads GS.

It belongs to the PdxS/SNZ family. In terms of assembly, in the presence of PdxT, forms a dodecamer of heterodimers.

The catalysed reaction is aldehydo-D-ribose 5-phosphate + D-glyceraldehyde 3-phosphate + L-glutamine = pyridoxal 5'-phosphate + L-glutamate + phosphate + 3 H2O + H(+). It functions in the pathway cofactor biosynthesis; pyridoxal 5'-phosphate biosynthesis. In terms of biological role, catalyzes the formation of pyridoxal 5'-phosphate from ribose 5-phosphate (RBP), glyceraldehyde 3-phosphate (G3P) and ammonia. The ammonia is provided by the PdxT subunit. Can also use ribulose 5-phosphate and dihydroxyacetone phosphate as substrates, resulting from enzyme-catalyzed isomerization of RBP and G3P, respectively. In Staphylococcus epidermidis (strain ATCC 35984 / DSM 28319 / BCRC 17069 / CCUG 31568 / BM 3577 / RP62A), this protein is Pyridoxal 5'-phosphate synthase subunit PdxS.